The primary structure comprises 153 residues: Transcriptional repressor NrdR (153 aa).

A zinc finger lies at Cys-3–Cys-34. Residues Phe-49–Asp-139 enclose the ATP-cone domain.

This sequence belongs to the NrdR family. It depends on Zn(2+) as a cofactor.

In terms of biological role, negatively regulates transcription of bacterial ribonucleotide reductase nrd genes and operons by binding to NrdR-boxes. This is Transcriptional repressor NrdR from Ehrlichia canis (strain Jake).